Reading from the N-terminus, the 157-residue chain is Histidine-containing phosphotransfer protein 5 (157 aa).

Position 1 is an N-acetylmethionine (Met-1). An HPt domain is found at 41-148 (TPDFVAEVVS…NLEKQILQAG (108 aa)). His-83 bears the Phosphohistidine mark.

In terms of assembly, interacts with the B-type response regulators ARR1 and ARR2. Binds to AHK2, AHK3, AHK4 and AHK5. Two-component system major event consists of a His-to-Asp phosphorelay between a sensor histidine kinase (HK) and a response regulator (RR). In plants, the His-to-Asp phosphorelay involves an additional intermediate named Histidine-containing phosphotransfer protein (HPt). This multistep phosphorelay consists of a His-Asp-His-Asp sequential transfer of a phosphate group between first a His and an Asp of the HK protein, followed by the transfer to a conserved His of the HPt protein and finally the transfer to an Asp in the receiver domain of the RR protein. As to expression, expressed in the whole plant.

It localises to the cytoplasm. The protein localises to the cytosol. The protein resides in the nucleus. Its function is as follows. Functions as a two-component phosphorelay mediator between cytokinin sensor histidine kinases and response regulators (B-type ARRs). Plays an important role in propagating cytokinin signal transduction through the multistep His-to-Asp phosphorelay. The chain is Histidine-containing phosphotransfer protein 5 (AHP5) from Arabidopsis thaliana (Mouse-ear cress).